Consider the following 88-residue polypeptide: Kunitz-type U15-theraphotoxin-Hhn1r (88 aa).

The first 27 residues, 1 to 27 (MGIARILSAVLFLSVLFVVTFPTLLSA), serve as a signal peptide directing secretion. Positions 28–33 (DHHDGR) are excised as a propeptide. Positions 37-85 (CRLPSDRGRCKASFERWYFNGTTCTKFVYGGYGGNDNRFPTEKACMKRC) constitute a BPTI/Kunitz inhibitor domain. Intrachain disulfides connect Cys37/Cys85 and Cys60/Cys81.

This sequence belongs to the venom Kunitz-type family. 01 (intermediate) subfamily. Expressed by the venom gland.

It localises to the secreted. Serine protease inhibitor that inhibits trypsin at a molar ratio of 1:1. The chain is Kunitz-type U15-theraphotoxin-Hhn1r from Cyriopagopus hainanus (Chinese bird spider).